Consider the following 294-residue polypeptide: 4-hydroxy-tetrahydrodipicolinate synthase (294 aa).

Residue Thr47 participates in pyruvate binding. The active-site Proton donor/acceptor is the Tyr135. The active-site Schiff-base intermediate with substrate is Lys163. Ile205 contacts pyruvate.

Belongs to the DapA family. As to quaternary structure, homotetramer; dimer of dimers.

The protein localises to the cytoplasm. It carries out the reaction L-aspartate 4-semialdehyde + pyruvate = (2S,4S)-4-hydroxy-2,3,4,5-tetrahydrodipicolinate + H2O + H(+). Its pathway is amino-acid biosynthesis; L-lysine biosynthesis via DAP pathway; (S)-tetrahydrodipicolinate from L-aspartate: step 3/4. Functionally, catalyzes the condensation of (S)-aspartate-beta-semialdehyde [(S)-ASA] and pyruvate to 4-hydroxy-tetrahydrodipicolinate (HTPA). The sequence is that of 4-hydroxy-tetrahydrodipicolinate synthase from Rickettsia typhi (strain ATCC VR-144 / Wilmington).